The chain runs to 411 residues: Ferrochelatase, mitochondrial (411 aa).

The N-terminal 41 residues, 1-41 (MAAFRAAHRLLGHILRNESSAGLVTQRWSSSAAVASVPKSS), are a transit peptide targeting the mitochondrion. The disordered stretch occupies residues 34 to 55 (VASVPKSSDPKPHAQPDKRKPK). Over residues 41 to 51 (SDPKPHAQPDK) the composition is skewed to basic and acidic residues. Protoporphyrin IX contacts are provided by R102, Y110, and S117. Position 183 (C183) interacts with [2Fe-2S] cluster. Catalysis depends on residues H217 and D370. The [2Fe-2S] cluster site is built by C390, C393, and C398.

Belongs to the ferrochelatase family. As to quaternary structure, homodimer. Homotetramer. [2Fe-2S] cluster serves as cofactor.

Its subcellular location is the mitochondrion inner membrane. It carries out the reaction heme b + 2 H(+) = protoporphyrin IX + Fe(2+). It participates in porphyrin-containing compound metabolism; protoheme biosynthesis; protoheme from protoporphyrin-IX: step 1/1. Functionally, catalyzes the ferrous insertion into protoporphyrin IX. In Xenopus laevis (African clawed frog), this protein is Ferrochelatase, mitochondrial.